The chain runs to 236 residues: Ubiquinone biosynthesis O-methyltransferase (236 aa).

Residues R39, G59, D80, and M124 each contribute to the S-adenosyl-L-methionine site.

Belongs to the methyltransferase superfamily. UbiG/COQ3 family.

It catalyses the reaction a 3-demethylubiquinol + S-adenosyl-L-methionine = a ubiquinol + S-adenosyl-L-homocysteine + H(+). It carries out the reaction a 3-(all-trans-polyprenyl)benzene-1,2-diol + S-adenosyl-L-methionine = a 2-methoxy-6-(all-trans-polyprenyl)phenol + S-adenosyl-L-homocysteine + H(+). It functions in the pathway cofactor biosynthesis; ubiquinone biosynthesis. In terms of biological role, O-methyltransferase that catalyzes the 2 O-methylation steps in the ubiquinone biosynthetic pathway. This Shewanella sp. (strain MR-4) protein is Ubiquinone biosynthesis O-methyltransferase.